Reading from the N-terminus, the 659-residue chain is UvrABC system protein B (659 aa).

Positions 25-182 (QSIENGNRGQ…KKLIEIQYER (158 aa)) constitute a Helicase ATP-binding domain. 38-45 (GVTGSGKT) is an ATP binding site. The short motif at 91–114 (YYDYYQPEAYVPQTDTFIEKDASI) is the Beta-hairpin element. The Helicase C-terminal domain maps to 429–582 (QIDDLYGEIQ…QMEYNEEHNI (154 aa)). One can recognise a UVR domain in the interval 622–657 (EKLIEQYEEEMKEAAKNLQFERAAELRDIIKDLKEN).

This sequence belongs to the UvrB family. Forms a heterotetramer with UvrA during the search for lesions. Interacts with UvrC in an incision complex.

It localises to the cytoplasm. Its function is as follows. The UvrABC repair system catalyzes the recognition and processing of DNA lesions. A damage recognition complex composed of 2 UvrA and 2 UvrB subunits scans DNA for abnormalities. Upon binding of the UvrA(2)B(2) complex to a putative damaged site, the DNA wraps around one UvrB monomer. DNA wrap is dependent on ATP binding by UvrB and probably causes local melting of the DNA helix, facilitating insertion of UvrB beta-hairpin between the DNA strands. Then UvrB probes one DNA strand for the presence of a lesion. If a lesion is found the UvrA subunits dissociate and the UvrB-DNA preincision complex is formed. This complex is subsequently bound by UvrC and the second UvrB is released. If no lesion is found, the DNA wraps around the other UvrB subunit that will check the other stand for damage. In Clostridium perfringens (strain SM101 / Type A), this protein is UvrABC system protein B.